Reading from the N-terminus, the 372-residue chain is Cell division protein FtsZ 1 (372 aa).

Residues glycine 51–asparagine 55, glycine 138–glycine 140, glutamate 169, arginine 173, and aspartate 216 contribute to the GTP site. Over residues proline 350–glutamate 360 the composition is skewed to acidic residues. Positions proline 350–leucine 372 are disordered. The span at glutamate 361–leucine 372 shows a compositional bias: low complexity.

The protein belongs to the FtsZ family. Homodimer. Polymerizes to form a dynamic ring structure in a strictly GTP-dependent manner. Interacts directly with several other division proteins.

The protein resides in the cytoplasm. In terms of biological role, essential cell division protein that forms a contractile ring structure (Z ring) at the future cell division site. The regulation of the ring assembly controls the timing and the location of cell division. One of the functions of the FtsZ ring is to recruit other cell division proteins to the septum to produce a new cell wall between the dividing cells. Binds GTP and shows GTPase activity. In Pyrococcus furiosus (strain ATCC 43587 / DSM 3638 / JCM 8422 / Vc1), this protein is Cell division protein FtsZ 1.